The primary structure comprises 206 residues: MATNITHHAGITRNERNQLRKQKGLTIWLTGLSASGKSTIAVELEHQLLQRGLHAYRLDGDNVRFGLNKDLGFSDADRNENIRRIAEVAKLFADSSSIAITSFISPFRADRDTARKLHEVPTPNDSTGLPFVEVFVDVPIEVAEKRDPKGLYKKAREGIIKEFTGISSPYEAPENPEVHVKNVDLPIQEAVKQIIDYLDSKKLLDA.

Residue 31 to 38 coordinates ATP; that stretch reads GLSASGKS. S105 (phosphoserine intermediate) is an active-site residue.

This sequence belongs to the APS kinase family.

It catalyses the reaction adenosine 5'-phosphosulfate + ATP = 3'-phosphoadenylyl sulfate + ADP + H(+). It participates in sulfur metabolism; hydrogen sulfide biosynthesis; sulfite from sulfate: step 2/3. Functionally, catalyzes the synthesis of activated sulfate. The polypeptide is Adenylyl-sulfate kinase (sD) (Emericella nidulans (strain FGSC A4 / ATCC 38163 / CBS 112.46 / NRRL 194 / M139) (Aspergillus nidulans)).